A 281-amino-acid chain; its full sequence is NAD kinase (281 aa).

Residue D66 is the Proton acceptor of the active site. NAD(+) is bound by residues 66–67 (DG), 137–138 (ND), R148, R165, D167, and 178–183 (TAYSMS).

Belongs to the NAD kinase family. It depends on a divalent metal cation as a cofactor.

It is found in the cytoplasm. It carries out the reaction NAD(+) + ATP = ADP + NADP(+) + H(+). In terms of biological role, involved in the regulation of the intracellular balance of NAD and NADP, and is a key enzyme in the biosynthesis of NADP. Catalyzes specifically the phosphorylation on 2'-hydroxyl of the adenosine moiety of NAD to yield NADP. This chain is NAD kinase, found in Chlorobium phaeovibrioides (strain DSM 265 / 1930) (Prosthecochloris vibrioformis (strain DSM 265)).